A 107-amino-acid chain; its full sequence is Iron-sulfur cluster assembly protein CyaY (107 aa).

The protein belongs to the frataxin family.

Involved in iron-sulfur (Fe-S) cluster assembly. May act as a regulator of Fe-S biogenesis. In Neisseria meningitidis serogroup C / serotype 2a (strain ATCC 700532 / DSM 15464 / FAM18), this protein is Iron-sulfur cluster assembly protein CyaY.